The chain runs to 396 residues: MIISAASDYRAAAQRTLPPFLFHYIDGGAYAEYTLRRNVEDLSQVALRQRVLKNMSDLSLETTLFNETLSMPVALAPVGLCGMYARRGEVQAAAAADAKGIPFTLSTVSVCPIEEVAPTIQRPMWFQLYVLRDRGFMRNALERAKAAGCSTLVFTVDMPTPGARYRDAHSGMSGPNAAMRRYWQAVMHPKWAWDVGLNGRPHDLGNISAYLGKPTGLEDYIGWLANNFDPSISWKDLEWIREFWDGPMVIKGLLDPEDARDAVRFGADGIVVSNHGGRQLDGVLSSARALPAIADAVKGDIAILADSGIRNGLDVVRMIALGADTVLLGRAYLYALATAGKAGVANLLDLIEKEMKVAMTLTGAKTISEISGDSLVQELGKSLPAALAPMSKGDAA.

The 380-residue stretch at 1 to 380 (MIISAASDYR…SGDSLVQELG (380 aa)) folds into the FMN hydroxy acid dehydrogenase domain. Tyr-24 contacts substrate. Positions 106 and 127 each coordinate FMN. Tyr-129 provides a ligand contact to substrate. Thr-155 contacts FMN. Residue Arg-164 coordinates substrate. Lys-251 provides a ligand contact to FMN. His-275 (proton acceptor) is an active-site residue. Position 278 (Arg-278) interacts with substrate. 306–330 (DSGIRNGLDVVRMIALGADTVLLGR) contacts FMN.

Belongs to the FMN-dependent alpha-hydroxy acid dehydrogenase family. Requires FMN as cofactor.

The protein localises to the cell inner membrane. It catalyses the reaction (S)-lactate + A = pyruvate + AH2. Its function is as follows. Catalyzes the conversion of L-lactate to pyruvate. Is coupled to the respiratory chain. The protein is L-lactate dehydrogenase of Salmonella paratyphi C (strain RKS4594).